We begin with the raw amino-acid sequence, 242 residues long: Coiled-coil domain-containing protein 107 (242 aa).

The N-terminal stretch at 1–24 (MEGAGPVLSILGLLLVSAPFGVLG) is a signal peptide. The segment at 27–62 (PSADLGAHPERGSQVSPGTTEPRRQPPPKDQRERAR) is disordered. Over residues 47–62 (EPRRQPPPKDQRERAR) the composition is skewed to basic and acidic residues. A helical transmembrane segment spans residues 65–85 (SLSLGALYTAAVVAFVLFKCL). The stretch at 97 to 132 (EKNKKKSSQSEQQLVQLTQQLAQTEQHLNHLMTQLD) forms a coiled coil. The disordered stretch occupies residues 186–210 (KEDQEAGNSQAWEEPITWSPETRNL).

It localises to the membrane. This is Coiled-coil domain-containing protein 107 (Ccdc107) from Mus musculus (Mouse).